The chain runs to 439 residues: Xylose isomerase (439 aa).

Residues histidine 99 and aspartate 102 contribute to the active site. Residues glutamate 230, glutamate 266, histidine 269, aspartate 294, aspartate 305, aspartate 307, and aspartate 337 each contribute to the Mg(2+) site.

It belongs to the xylose isomerase family. Homotetramer. Mg(2+) serves as cofactor.

Its subcellular location is the cytoplasm. It catalyses the reaction alpha-D-xylose = alpha-D-xylulofuranose. This is Xylose isomerase from Shouchella clausii (strain KSM-K16) (Alkalihalobacillus clausii).